Consider the following 433-residue polypeptide: Transcription factor elt-2 (433 aa).

2 disordered regions span residues 1 to 47 (MDNN…ELPR) and 194 to 235 (GQPP…RQGL). The segment covering 27-43 (PTQNMDPPEQNNESQLS) has biased composition (polar residues). Over residues 211–234 (AKQSSKKSSSSNRGSNGSASRRQG) the composition is skewed to low complexity. Residues 237–261 (CSNCNGTNTTLWRRNAEGDPVCNAC) form a GATA-type zinc finger. The segment at 275-332 (SMKKEGALQTRKRKSKSGDSSTPSTSRARERKFERASSSTEKAQRSSNRRAGSAKADR) is disordered. A compositionally biased stretch (polar residues) spans 310–324 (ASSSTEKAQRSSNRR).

Interacts with lag-1. Interacts with pha-4. Interacts with rpt-6. In terms of processing, may be ubiquitinated in response to infection by B.pseudomallei. As to expression, expressed in the intestine.

It localises to the nucleus. Functionally, transcriptional activator that binds to the consensus sequence 5'-[AT]GATA[AG]-3'. Predominantly directs the transcription of intestinal genes such as ges-1, cpr-6, pho-1, ftn-1, vit-2 and lev-11, and itself. Required for gut-specific differentiation, specifically acting with the GATA region-binding transcription factor elt-7 to control normal gene expression and promote normal formation of the intestine. Regulates intestinal gene expression in response to hypoxia to promote longevity. Modulation of longevity may, in part, be the result of regulation of expression of daf-16 isoforms d and f in the intestine. Regulates tissue specific gene expression at basal levels and in response to bacterial infection in the intestine to control innate immunity. Plays a role in the induction of metal-responsive genes, activating gene expression from zinc-activated promoters and iron-dependent promoters and enhancers. May regulate the expression of genes that control sensitivity to oxidative stress, in a mab-3-dependent manner, and osmotic stress, in conjunction with the GATA region-binding transcription factor elt-3. May play a role in sphingolipid signaling by regulating the expression of the sphingosine-1-phosphate degrading enzyme, sphingosine-1-phosphate lyase. May act with the Notch signaling pathway to promote endodermal gene expression. Has a protective role in response to infection by Gram-negative bacteria such as S.enterica, E.coli, P.aeruginosa and B.pseudomallei, Gram-positive bacterium E.faecalis and fungal pathogen C.neoformans. An association with the 26S proteasome regulatory subunit rpt-6, in part, controls gene expression in response to infection by P.aeruginosa. Regulates gene expression during the recovery phase following a bacterial infection. May act with p38-activated transcription factors to control p38 gene induction in response to bacterial infection. Controls lysosome formation in the intestine by controlling lysosomal gene expression. The protein is Transcription factor elt-2 of Caenorhabditis elegans.